The chain runs to 135 residues: Interleukin-4 (135 aa).

Residues Met-1–Gly-24 form the signal peptide. 3 disulfide bridges follow: Cys-27–Cys-135, Cys-48–Cys-85, and Cys-70–Cys-105. Asn-62 carries N-linked (GlcNAc...) asparagine glycosylation.

Belongs to the IL-4/IL-13 family.

Its subcellular location is the secreted. Its function is as follows. Participates in at least several B-cell activation processes as well as of other cell types. It is a costimulator of DNA-synthesis. It induces the expression of class II MHC molecules on resting B-cells. It enhances both secretion and cell surface expression of IgE and IgG1. It also regulates the expression of the low affinity Fc receptor for IgE (CD23) on both lymphocytes and monocytes. Positively regulates IL31RA expression in macrophages. Stimulates autophagy in dendritic cells by interfering with mTORC1 signaling and through the induction of RUFY4. In Bubalus carabanensis (Swamp type water buffalo), this protein is Interleukin-4 (IL4).